The chain runs to 64 residues: UPF0434 protein TERTU_2813 (64 aa).

The protein belongs to the UPF0434 family.

This Teredinibacter turnerae (strain ATCC 39867 / T7901) protein is UPF0434 protein TERTU_2813.